The primary structure comprises 157 residues: Crossover junction endodeoxyribonuclease RuvC (157 aa).

Active-site residues include Asp7, Glu66, and Asp139. Residues Asp7, Glu66, and Asp139 each contribute to the Mg(2+) site.

Belongs to the RuvC family. As to quaternary structure, homodimer which binds Holliday junction (HJ) DNA. The HJ becomes 2-fold symmetrical on binding to RuvC with unstacked arms; it has a different conformation from HJ DNA in complex with RuvA. In the full resolvosome a probable DNA-RuvA(4)-RuvB(12)-RuvC(2) complex forms which resolves the HJ. Mg(2+) serves as cofactor.

The protein resides in the cytoplasm. It catalyses the reaction Endonucleolytic cleavage at a junction such as a reciprocal single-stranded crossover between two homologous DNA duplexes (Holliday junction).. In terms of biological role, the RuvA-RuvB-RuvC complex processes Holliday junction (HJ) DNA during genetic recombination and DNA repair. Endonuclease that resolves HJ intermediates. Cleaves cruciform DNA by making single-stranded nicks across the HJ at symmetrical positions within the homologous arms, yielding a 5'-phosphate and a 3'-hydroxyl group; requires a central core of homology in the junction. The consensus cleavage sequence is 5'-(A/T)TT(C/G)-3'. Cleavage occurs on the 3'-side of the TT dinucleotide at the point of strand exchange. HJ branch migration catalyzed by RuvA-RuvB allows RuvC to scan DNA until it finds its consensus sequence, where it cleaves and resolves the cruciform DNA. This chain is Crossover junction endodeoxyribonuclease RuvC, found in Campylobacter curvus (strain 525.92).